Consider the following 401-residue polypeptide: Pyruvyl transferase 1 (401 aa).

The N-terminal stretch at 1 to 30 (MFANINIRKSVWLFLLAAVSCTLFIYGVTR) is a signal peptide. Residues 38-64 (NPSSLTSPSSSTSVDKKKPLFTKSPRN) form a disordered region. A compositionally biased stretch (low complexity) spans 39–50 (PSSLTSPSSSTS).

It belongs to the polysaccharide pyruvyl transferase family.

In terms of biological role, involved in cell wall biogenesis. Has a role in the addition of Gal-beta1,3 moieties to galactomannans and their subsequent pyruvylation. The sequence is that of Pyruvyl transferase 1 (pvg1) from Schizosaccharomyces pombe (strain 972 / ATCC 24843) (Fission yeast).